We begin with the raw amino-acid sequence, 860 residues long: JmjC domain-containing histone demethylation protein 1 (860 aa).

Disordered regions lie at residues 1–45 (MSEQ…EEGK), 117–212 (STSP…PKRK), and 408–440 (DVKEKGRGNDSREGSEIRKEGSHLTEGDNGGEI). The PHD-type zinc-finger motif lies at 23 to 116 (PEPCPLCRET…KWYCAPCLAR (94 aa)). Composition is skewed to basic and acidic residues over residues 183–192 (IDMKSEREQQ) and 408–433 (DVKEKGRGNDSREGSEIRKEGSHLTE). In terms of domain architecture, JmjC spans 416–579 (NDSREGSEIR…TQLRLRQIEI (164 aa)). Position 471 (Thr471) interacts with substrate. Residues His474 and Asp476 each coordinate Fe cation. A substrate-binding site is contributed by Lys491. Fe cation is bound at residue His547. Disordered stretches follow at residues 744–795 (HPPA…ANEN) and 837–860 (GPKLDKEKISQPQGKVEEDMDIDH). The span at 750–763 (ENRQSPQIETTTVQ) shows a compositional bias: polar residues. Residues 767–795 (PSTSSSDAISGSGPGASPGASANGGANEN) are compositionally biased toward low complexity.

It belongs to the JHDM1 histone demethylase family. Fe(2+) serves as cofactor.

It localises to the nucleus. It catalyses the reaction N(6),N(6)-dimethyl-L-lysyl(36)-[histone H3] + 2 2-oxoglutarate + 2 O2 = L-lysyl(36)-[histone H3] + 2 formaldehyde + 2 succinate + 2 CO2. In terms of biological role, histone demethylase that specifically demethylates 'Lys-36' of histone H3, thereby playing a central role in histone code. In Cryptococcus neoformans var. neoformans serotype D (strain JEC21 / ATCC MYA-565) (Filobasidiella neoformans), this protein is JmjC domain-containing histone demethylation protein 1 (JHD1).